Here is a 398-residue protein sequence, read N- to C-terminus: MNKKKLGIRLLSLLALGGFVLANPVFADQNFARNEKEAKDSAITFIQKSAAIKAGARSAEDIKLDKVNLGGELSGSNMYVYNISTGGFVIVSGDKRSPEILGYSTSGSFDANGKENIASFMESYVEQIKENKKLDTTYAGTAEIKQPVVKSLLDSKGIHYNQGNPYNLLTPVIEKVKPGEQSFVGQHAATGCVATATAQIMKYHNYPNKGLKDYTYTLSSNNPYFNHPKNLFAAISTRQYNWNNILPTYSGRESNVQKMAISELMADVGISVDMDYGPSSGSAGSSRVQRALKENFGYNQSVHQINRSDFSKQDWESQIDKELSQNQPVYYQGVGKVGGHAFVIDGADGRNFYHVNWGWGGVSDGFFRLDALNPSALGTGGGAGGFNGYQSAVVGIKP.

A signal peptide spans 1–27; the sequence is MNKKKLGIRLLSLLALGGFVLANPVFA. The propeptide occupies 28–145; the sequence is DQNFARNEKE…TTYAGTAEIK (118 aa). Residue Cys-192 is the Nucleophile of the active site. Cys-192 carries the post-translational modification Cysteine methyl disulfide; in zymogen form. A protein contacts are provided by Ser-282 and Gly-339. The active-site Proton acceptor is the His-340. The segment at 368 to 390 is C-terminal active site loop; sequence RLDALNPSALGTGGGAGGFNGYQ.

It belongs to the peptidase C10 family. As to quaternary structure, monomer. Post-translationally, the mature protease is derived from the precursor sequence by cleavage, either in cis via an autocatalytic mechanism, or in trans by mature SpeB or host proteases (trypsin, plasmin or subtilisin). Maturation can involve a number of protein cleavage intermediates. Mature SpeB probably plays the most important role in protein maturation in physiological conditions. Methylthiolation at Cys-192 of the inactive zymogen form is probably involved in the mechanism of secretion of the proteinase into the culture fluid.

Its subcellular location is the secreted. The protein localises to the host extracellular space. It is found in the host cytoplasm. It carries out the reaction Preferential cleavage with hydrophobic residues at P2, P1 and P1'.. Its activity is regulated as follows. Synthesized as an inactive zymogen to protect the intracellular components of the bacteria from proteolytic activity during protein production. Once secreted into the extracellular milieu, cleaved into the active protease: maturation can be mediated in cis by autocatalytic cleavage, or in trans by mature SpeB or host proteases. Protease activity is strongly inhibited by zinc and copper, which prevent its maturation into an active protease: inhibition by metal ions may be required to prevent proteolysis of streptococcal proteins. Functionally, cysteine protease that acts as a key streptococcal virulence factor by cleaving host proteins involved in immune response. Triggers inflammation by mediating cleavage of host proteins, which can both promote host pathogenesis by triggering sterile inflammation and/or restrict streptococcal infection, depending on host immune statue and infection site. Cleaves host gasdermin-A (GSDMA) in epithelial cells, promoting GSDMA activation and formation of gasdermin pores, triggering pyroptosis. Pyroptosis triggers the elimination of the infected skin cell, depriving the pathogen of its protective niche, while inducing an inflammatory response. This ultimately prevents bacterial penetration of the epithelial barrier and a subsequent systemic dissemination of the pathogen. Also mediates cleavage of the cytokine precursor interleukin-1 beta (IL1B) to its mature form, resulting in inflammation and septic shock. SpeB-mediated maturation of IL1B plays a dual role depending on infection site: while IL1B inflammatory response prevents bacterial growth during invasive skin infections, it promotes streptococcal infection of the nasopharynx by disrupting colonization resistance mediated by the microbiota. Inhibits host autophagy be catalyzing cleavage and inactivation of key autophagy factors, such as CALCOCO2, NBR1 and SQSTM1. Cleaves and inhibits a number of complement factors, such as C2, C3-beta chain of C3, C4, C5 or SERPING1, thereby promoting evasion of host immunity. May also impair adaptive immunity by catalyzing cleavage and degradation of host immunoglobulins to promote immune system evasion; the relevance of this activity is however unsure in vivo. Catalyzes maturation and release of the peptide hormone bradykinin from the precursor Kininogen-1 (KNG1) to produce hypotension during septic shock. Also involved in bacterial translocation across the host epithelial barrier by mediating cleavage and degradation of host epithelial junction proteins, such as CDH1 and OCLN. Additionally, has been involved in degradation of fibronectin and vitronectin, two host extracellular matrix proteins involved in tissue integrity. Also able to catalyze cleavage and degradation of streptococcal proteins, such as C5a peptidase, EndoS or SmeZ. Degradation of streptococcal proteins is however strictly regulated to preserve integrity of other virulence factors. This chain is Streptopain (speB), found in Streptococcus pyogenes serotype M28 (strain MGAS6180).